The following is a 467-amino-acid chain: Dihydrolipoyl dehydrogenase 3 (467 aa).

FAD is bound by residues 34 to 43, Lys52, and Ala116; that span reads EGRETLGGTC. Cys43 and Cys48 are joined by a disulfide. Residues 182-186, Glu205, Val239, and 272-275 contribute to the NAD(+) site; these read GAGVI and AIGR. The FAD site is built by Asp314 and Ala322. Residue His446 is the Proton acceptor of the active site.

This sequence belongs to the class-I pyridine nucleotide-disulfide oxidoreductase family. Homodimer. FAD is required as a cofactor.

It localises to the cytoplasm. It catalyses the reaction N(6)-[(R)-dihydrolipoyl]-L-lysyl-[protein] + NAD(+) = N(6)-[(R)-lipoyl]-L-lysyl-[protein] + NADH + H(+). Its function is as follows. LPD-3 may substitute for lipoamide dehydrogenase of the 2-oxoglutarate dehydrogenase and pyruvate multienzyme complexes when the latter is inactive or missing. This Pseudomonas aeruginosa (strain ATCC 15692 / DSM 22644 / CIP 104116 / JCM 14847 / LMG 12228 / 1C / PRS 101 / PAO1) protein is Dihydrolipoyl dehydrogenase 3 (lpd3).